Here is a 419-residue protein sequence, read N- to C-terminus: Acetyltransferase fsoF (419 aa).

The N-linked (GlcNAc...) asparagine glycan is linked to asparagine 2. A run of 2 helical transmembrane segments spans residues 4–24 (TIIS…VVGF) and 62–82 (AFLG…AILS). Positions 89–114 (QSPTSSLGGLIPPTTRDTPKTQNNAT) are disordered. Residues asparagine 112 and asparagine 169 are each glycosylated (N-linked (GlcNAc...) asparagine). The next 4 helical transmembrane spans lie at 230–250 (YWAI…VVAV), 314–334 (YVFM…SDVS), 337–357 (IPLG…GIML), and 386–406 (VSGP…WIYM).

This sequence belongs to the wax synthase family.

The protein localises to the membrane. The enzyme catalyses 3-O-(beta-D-glucopyranosyl)-2alpha-hydroxyisomotiol + acetyl-CoA = 3-O-(beta-D-glucopyranosyl)-2alpha-acetoxyisomotiol + CoA. It catalyses the reaction 2-deacetylfuscoatroside + acetyl-CoA = fuscoatroside + CoA. It participates in secondary metabolite biosynthesis; terpenoid biosynthesis. Functionally, terpene cyclase-glycosyl transferase fusion protein; part of the gene cluster that mediates the biosynthesis of the enfumafungin-type antibiotic, fuscoatroside. Within the pathway, fsoF catalyzes the acetylation of C2-alpha-OH following the C2 hydroxylation by the cytochrome monooxygenase fsoD. The fuscoatroside biosynthesis is initiated by the cyclization of 2,3(S)-oxidosqualene through FsoA's terpene cyclase (TC) domain, leading to the formation of the fernane skeleton isomotiol, harboring a fernane triterpene skeleton with a C8-C9 double bond. Subsequently, C2-alpha-hydroxylation mediated by fsoD results in the production of 2-alpha-hydroxy-isomotiol, which is further acetylated by fsoF. The glycosyltransferase (GT) domain of FsoA may convert isomotiol, 2-alpha-hydroxy-isomotiol, and the acetylated derivative of 2-alpha-hydroxy-isomotiol into their corresponding glycosides 3-O-(beta-D-glucopyranosyl)-isomotiol, 3-O-(beta-D-glucopyranosyl)-2-alpha-hydroxy-isomotiol, and 3-O-(beta-D-glucopyranosyl)-2-alpha-acetoxy-isomotiol, which then undergo oxidative cleavage under the action of fsoE to form s 2-deacetoxy-fuscoatroside, 2-deacetyl-fuscoatroside, and fuscoatroside, respectively. Although hydroxylation followed by acetylation of 3-O-(beta-D-glucopyranosyl)-isomotiol and 2-deacetoxy-fuscoatroside by fsoD and fsoF could not be ruled out, this process is likely to occur with difficulty due to bulky steric hindrance caused by the presence of a glycan at C3 in these compounds. Interestingly, fsoE can also utilize the aglycones isomotiol and 2-alpha-hydroxy-isomotiol as substrates to generate 19-beta-hydroxy-isomotiol and 2-alpha,19-beta-dihydroxy-isomotiol, respectively. These reactions occur with lower efficiency. Finally, fsoE can further convert 2-alpha,19-beta-dihydroxy-isomotiol into 2-alpha-hydroxy-ismotiol-19-one and 2-alpha-hydroxy-ismotiol-19-one into 2-deacetyl-3-deglucopyranosyl-fuscoatroside. This is Acetyltransferase fsoF from Humicola fuscoatra.